Reading from the N-terminus, the 548-residue chain is Adenine deaminase (548 aa).

This sequence belongs to the metallo-dependent hydrolases superfamily. Adenine deaminase family. Mn(2+) serves as cofactor.

It carries out the reaction adenine + H2O + H(+) = hypoxanthine + NH4(+). This chain is Adenine deaminase, found in Borreliella burgdorferi (strain ATCC 35210 / DSM 4680 / CIP 102532 / B31) (Borrelia burgdorferi).